We begin with the raw amino-acid sequence, 101 residues long: MAKTSMKAREAKRTKLVAQYAEKRAALKAIISGTDSSDEERWDAVLKLQSLPRDSSSSRQRNRCNITGRPHGFLRKFGLSRIKLRETMMRGEVPGLKKASW.

This sequence belongs to the universal ribosomal protein uS14 family. Part of the 30S ribosomal subunit. Contacts proteins S3 and S10.

Its function is as follows. Binds 16S rRNA, required for the assembly of 30S particles and may also be responsible for determining the conformation of the 16S rRNA at the A site. The polypeptide is Small ribosomal subunit protein uS14 (Colwellia psychrerythraea (strain 34H / ATCC BAA-681) (Vibrio psychroerythus)).